The primary structure comprises 722 residues: uncharacterized protein (722 aa).

This is an uncharacterized protein from Treponema pallidum (strain Nichols).